Reading from the N-terminus, the 169-residue chain is UPF0251 protein MM_2090 (169 aa).

This sequence belongs to the UPF0251 family.

The sequence is that of UPF0251 protein MM_2090 from Methanosarcina mazei (strain ATCC BAA-159 / DSM 3647 / Goe1 / Go1 / JCM 11833 / OCM 88) (Methanosarcina frisia).